Reading from the N-terminus, the 96-residue chain is UPF0235 protein YpsIP31758_0827 (96 aa).

It belongs to the UPF0235 family.

The protein is UPF0235 protein YpsIP31758_0827 of Yersinia pseudotuberculosis serotype O:1b (strain IP 31758).